Consider the following 448-residue polypeptide: Phosphoglucosamine mutase (448 aa).

The active-site Phosphoserine intermediate is serine 102. Mg(2+)-binding residues include serine 102, aspartate 243, aspartate 245, and aspartate 247. Serine 102 is modified (phosphoserine).

The protein belongs to the phosphohexose mutase family. The cofactor is Mg(2+). In terms of processing, activated by phosphorylation.

It carries out the reaction alpha-D-glucosamine 1-phosphate = D-glucosamine 6-phosphate. Functionally, catalyzes the conversion of glucosamine-6-phosphate to glucosamine-1-phosphate. This is Phosphoglucosamine mutase from Parvibaculum lavamentivorans (strain DS-1 / DSM 13023 / NCIMB 13966).